The following is a 370-amino-acid chain: MLKVYFLALFLAGCSAFVLDEIRGINIGQSPQKVLVDHVNTVQTSWVAEHNEISEFEMKFKVMDVKFAEPLEKDSDVASELFVRGEIVPEPLPDTFDAREKWPDCNTIKLIRNQATCGSCWAFGAAEVISDRVCIQSNGTQQPVISVEDILSCCGTTCGYGCKGGYSIEALRFWASSGAVTGGDYGGHGCMPYSFAPCTKNCPESTTPSCKTTCQSSYKTEEYKKDKHYGASAYKVTTTKSVTEIQTEIYHYGPVEASYKVYEDFYHYKSGVYHYTSGKLVGGHAVKIIGWGVENGVDYWLIANSWGTSFGEKGFFKIRRGTNECQIEGNVVAGIAKLGTHSETYEDDGGAATSCSFIMCTLMVLTYYFV.

An N-terminal signal peptide occupies residues 1-16 (MLKVYFLALFLAGCSA). The propeptide occupies 17–91 (FVLDEIRGIN…FVRGEIVPEP (75 aa)). 6 cysteine pairs are disulfide-bonded: Cys-105-Cys-134, Cys-117-Cys-162, Cys-153-Cys-210, Cys-154-Cys-158, Cys-190-Cys-214, and Cys-198-Cys-202. Cys-120 is an active-site residue. Asn-138 carries N-linked (GlcNAc...) asparagine glycosylation. Residues His-284 and Asn-304 contribute to the active site.

Belongs to the peptidase C1 family.

This chain is Cathepsin B-like cysteine proteinase 3 (cpr-3), found in Caenorhabditis elegans.